A 605-amino-acid chain; its full sequence is Anaerobic ribonucleoside-triphosphate reductase (605 aa).

Residues His64 and His66 each contribute to the dCTP site. His64, His66, Asp67, Glu100, and Lys103 together coordinate dGTP. DCTP-binding positions include Glu100, Lys103, Gln114, Lys146, and 445-448 (AENL). Residues Glu100, Lys103, Gln114, and Lys146 each contribute to the dATP site. Residue Glu100 coordinates dTTP. DTTP-binding residues include Gln114 and Lys146. DGTP contacts are provided by Lys146, Asn447, and Leu448. Positions 482–605 (ENITPFEKIS…KEIMHRVKHQ (124 aa)) constitute a Glycine radical domain. Zn(2+) is bound by residues Cys543, Cys546, Cys561, and Cys564. At Gly580 the chain carries Glycine radical.

The protein belongs to the anaerobic ribonucleoside-triphosphate reductase family. In terms of assembly, homodimer. Forms a tetramer composed of two NrdD and two NrdG subunits.

The enzyme catalyses a ribonucleoside 5'-triphosphate + formate + H(+) = a 2'-deoxyribonucleoside 5'-triphosphate + CO2 + H2O. Its activity is regulated as follows. Activated under anaerobic conditions by NrdG, a tightly associated activase. Activation involves the formation of a glycyl radical at Gly-580. Its function is as follows. Catalyzes the conversion of ribonucleotides into deoxyribonucleotides, which are required for DNA synthesis and repair. This Enterobacteria phage T4 (Bacteriophage T4) protein is Anaerobic ribonucleoside-triphosphate reductase.